A 171-amino-acid polypeptide reads, in one-letter code: Co-chaperone protein HscB homolog (171 aa).

The region spanning 2–74 (NHFELFGLPP…ISRAEYLLSQ (73 aa)) is the J domain.

This sequence belongs to the HscB family. Interacts with HscA and stimulates its ATPase activity.

Its function is as follows. Co-chaperone involved in the maturation of iron-sulfur cluster-containing proteins. Seems to help targeting proteins to be folded toward HscA. The polypeptide is Co-chaperone protein HscB homolog (Vibrio vulnificus (strain CMCP6)).